A 164-amino-acid chain; its full sequence is FMN reductase (NADH) RutF (164 aa).

This sequence belongs to the non-flavoprotein flavin reductase family. RutF subfamily.

The enzyme catalyses FMNH2 + NAD(+) = FMN + NADH + 2 H(+). Catalyzes the reduction of FMN to FMNH2 which is used to reduce pyrimidine by RutA via the Rut pathway. This chain is FMN reductase (NADH) RutF, found in Escherichia coli O127:H6 (strain E2348/69 / EPEC).